The sequence spans 359 residues: Phosphate acyltransferase (359 aa).

The disordered stretch occupies residues Ala338–Ala359.

It belongs to the PlsX family. Homodimer. Probably interacts with PlsY.

The protein resides in the cytoplasm. The catalysed reaction is a fatty acyl-[ACP] + phosphate = an acyl phosphate + holo-[ACP]. The protein operates within lipid metabolism; phospholipid metabolism. Its function is as follows. Catalyzes the reversible formation of acyl-phosphate (acyl-PO(4)) from acyl-[acyl-carrier-protein] (acyl-ACP). This enzyme utilizes acyl-ACP as fatty acyl donor, but not acyl-CoA. This chain is Phosphate acyltransferase, found in Cupriavidus taiwanensis (strain DSM 17343 / BCRC 17206 / CCUG 44338 / CIP 107171 / LMG 19424 / R1) (Ralstonia taiwanensis (strain LMG 19424)).